Here is a 145-residue protein sequence, read N- to C-terminus: Peptide methionine sulfoxide reductase MsrB (145 aa).

In terms of domain architecture, MsrB spans 6–129 (KNERLQQLTD…NSAALRFIPV (124 aa)). Residue cysteine 118 is the Nucleophile of the active site.

It belongs to the MsrB Met sulfoxide reductase family.

It catalyses the reaction L-methionyl-[protein] + [thioredoxin]-disulfide + H2O = L-methionyl-(R)-S-oxide-[protein] + [thioredoxin]-dithiol. This chain is Peptide methionine sulfoxide reductase MsrB, found in Listeria monocytogenes serovar 1/2a (strain ATCC BAA-679 / EGD-e).